A 124-amino-acid polypeptide reads, in one-letter code: Small ribosomal subunit protein bS6 (124 aa).

The segment at 96-124 (ETAPSPMMKEVQREEARKAAQTTTEGQAA) is disordered. Positions 115-124 (AQTTTEGQAA) are enriched in polar residues.

The protein belongs to the bacterial ribosomal protein bS6 family.

In terms of biological role, binds together with bS18 to 16S ribosomal RNA. The protein is Small ribosomal subunit protein bS6 of Cupriavidus pinatubonensis (strain JMP 134 / LMG 1197) (Cupriavidus necator (strain JMP 134)).